Reading from the N-terminus, the 253-residue chain is Putative glutamine amidotransferase PB2B2.05 (253 aa).

The 224-residue stretch at Ile-5–Gln-228 folds into the Glutamine amidotransferase type-1 domain. The active-site Nucleophile is the Cys-100. Active-site residues include His-200 and Glu-202.

It localises to the cytoplasm. The protein localises to the nucleus. The protein is Putative glutamine amidotransferase PB2B2.05 of Schizosaccharomyces pombe (strain 972 / ATCC 24843) (Fission yeast).